Consider the following 565-residue polypeptide: Receptor-like serine/threonine-protein kinase NCRK (565 aa).

A signal peptide spans 1–23 (MKMRVETALAILLVLISIQQCYG). The Extracellular portion of the chain corresponds to 24 to 103 (GVSNYTCTCF…SKKQYLSRKL (80 aa)). N-linked (GlcNAc...) asparagine glycans are attached at residues N27, N37, N45, N77, and N85. The helical transmembrane segment at 104–124 (VIVILLFCGVLISLAFLASMI) threads the bilayer. At 125–565 (CYICRKDKFS…PVLLEPSAHI (441 aa)) the chain is on the cytoplasmic side. The region spanning 210 to 495 (FSSNSVIGHG…REVVQILSTI (286 aa)) is the Protein kinase domain. Residues 216–224 (IGHGGSSCV) and K238 contribute to the ATP site. D339 (proton acceptor) is an active-site residue. Residues T378 and T383 each carry the phosphothreonine modification. Y391 carries the post-translational modification Phosphotyrosine.

The protein belongs to the protein kinase superfamily. Ser/Thr protein kinase family. Interacts with ARAC5. Post-translationally, phosphorylated. As to expression, mostly expressed in leaf primordia, root and shoot apical meristems, lateral root primordia, and stele of older roots and hypocotyls. In leaves and cotyledons, highest levels observed in trichomes, vasculatures, and hydathode endothem.

It is found in the cell membrane. The protein resides in the prevacuolar compartment membrane. Its subcellular location is the endosome. It carries out the reaction L-seryl-[protein] + ATP = O-phospho-L-seryl-[protein] + ADP + H(+). The enzyme catalyses L-threonyl-[protein] + ATP = O-phospho-L-threonyl-[protein] + ADP + H(+). The chain is Receptor-like serine/threonine-protein kinase NCRK (NCRK) from Arabidopsis thaliana (Mouse-ear cress).